The primary structure comprises 308 residues: Acetyl-coenzyme A carboxylase carboxyl transferase subunit beta 1 (308 aa).

In terms of domain architecture, CoA carboxyltransferase N-terminal spans 25–294 (VWTKCTSCEQ…PLVVSVNESP (270 aa)). Cys29, Cys32, Cys48, and Cys51 together coordinate Zn(2+). The C4-type zinc-finger motif lies at 29 to 51 (CTSCEQVLYHAELERNLEVCPKC). Positions 288 to 308 (VSVNESPNEEPYSVPEVDEKG) are disordered.

It belongs to the AccD/PCCB family. As to quaternary structure, acetyl-CoA carboxylase is a heterohexamer composed of biotin carboxyl carrier protein (AccB), biotin carboxylase (AccC) and two subunits each of ACCase subunit alpha (AccA) and ACCase subunit beta (AccD). It depends on Zn(2+) as a cofactor.

It localises to the cytoplasm. The catalysed reaction is N(6)-carboxybiotinyl-L-lysyl-[protein] + acetyl-CoA = N(6)-biotinyl-L-lysyl-[protein] + malonyl-CoA. Its pathway is lipid metabolism; malonyl-CoA biosynthesis; malonyl-CoA from acetyl-CoA: step 1/1. In terms of biological role, component of the acetyl coenzyme A carboxylase (ACC) complex. Biotin carboxylase (BC) catalyzes the carboxylation of biotin on its carrier protein (BCCP) and then the CO(2) group is transferred by the transcarboxylase to acetyl-CoA to form malonyl-CoA. This chain is Acetyl-coenzyme A carboxylase carboxyl transferase subunit beta 1, found in Vibrio parahaemolyticus serotype O3:K6 (strain RIMD 2210633).